Reading from the N-terminus, the 286-residue chain is Sulfate transport system permease protein CysW (286 aa).

Helical transmembrane passes span Leu20–Pro40, Leu74–Ile94, Val108–Tyr128, Ile145–Ala165, Leu207–Val227, and Tyr255–Leu275. An ABC transmembrane type-1 domain is found at Ile69–Lys272.

The protein belongs to the binding-protein-dependent transport system permease family. CysTW subfamily. The complex is composed of two ATP-binding proteins (CysA), two transmembrane proteins (CysT and CysW) and a solute-binding protein (CysP).

It is found in the cell inner membrane. In terms of biological role, part of the ABC transporter complex CysAWTP (TC 3.A.1.6.1) involved in sulfate/thiosulfate import. Probably responsible for the translocation of the substrate across the membrane. This chain is Sulfate transport system permease protein CysW (cysW), found in Synechococcus elongatus (strain ATCC 33912 / PCC 7942 / FACHB-805) (Anacystis nidulans R2).